The following is a 216-amino-acid chain: Large ribosomal subunit protein uL3 (216 aa).

The interval 136 to 155 (GVSISHRSHGSTGQRQDPGK) is disordered. An N5-methylglutamine modification is found at glutamine 151.

It belongs to the universal ribosomal protein uL3 family. Part of the 50S ribosomal subunit. Forms a cluster with proteins L14 and L19. Methylated by PrmB.

In terms of biological role, one of the primary rRNA binding proteins, it binds directly near the 3'-end of the 23S rRNA, where it nucleates assembly of the 50S subunit. This is Large ribosomal subunit protein uL3 from Rickettsia prowazekii (strain Madrid E).